The primary structure comprises 382 residues: Mannitol-1-phosphate 5-dehydrogenase (382 aa).

Residue 3-14 (ALHFGAGNIGRG) participates in NAD(+) binding.

It belongs to the mannitol dehydrogenase family.

The enzyme catalyses D-mannitol 1-phosphate + NAD(+) = beta-D-fructose 6-phosphate + NADH + H(+). The chain is Mannitol-1-phosphate 5-dehydrogenase from Mannheimia succiniciproducens (strain KCTC 0769BP / MBEL55E).